Here is a 271-residue protein sequence, read N- to C-terminus: 5-deoxy-glucuronate isomerase (271 aa).

Belongs to the isomerase IolB family.

It carries out the reaction 5-deoxy-D-glucuronate = 5-dehydro-2-deoxy-D-gluconate. Its pathway is polyol metabolism; myo-inositol degradation into acetyl-CoA; acetyl-CoA from myo-inositol: step 4/7. In terms of biological role, involved in the isomerization of 5-deoxy-glucuronate (5DG) to 5-dehydro-2-deoxy-D-gluconate (DKG or 2-deoxy-5-keto-D-gluconate). In Lacticaseibacillus casei (Lactobacillus casei), this protein is 5-deoxy-glucuronate isomerase.